Consider the following 206-residue polypeptide: Triosephosphate isomerase (206 aa).

The Electrophile role is filled by His-76. The active-site Proton acceptor is Glu-146.

Belongs to the triosephosphate isomerase family. Homodimer.

It catalyses the reaction D-glyceraldehyde 3-phosphate = dihydroxyacetone phosphate. It participates in carbohydrate biosynthesis; gluconeogenesis. Its pathway is carbohydrate degradation; glycolysis; D-glyceraldehyde 3-phosphate from glycerone phosphate: step 1/1. In Aedes togoi (Mosquito), this protein is Triosephosphate isomerase (Tpi).